A 470-amino-acid chain; its full sequence is L-seryl-tRNA(Sec) selenium transferase (470 aa).

Lys292 is modified (N6-(pyridoxal phosphate)lysine).

This sequence belongs to the SelA family. Pyridoxal 5'-phosphate is required as a cofactor.

The protein localises to the cytoplasm. The enzyme catalyses L-seryl-tRNA(Sec) + selenophosphate + H(+) = L-selenocysteinyl-tRNA(Sec) + phosphate. It participates in aminoacyl-tRNA biosynthesis; selenocysteinyl-tRNA(Sec) biosynthesis; selenocysteinyl-tRNA(Sec) from L-seryl-tRNA(Sec) (bacterial route): step 1/1. In terms of biological role, converts seryl-tRNA(Sec) to selenocysteinyl-tRNA(Sec) required for selenoprotein biosynthesis. This is L-seryl-tRNA(Sec) selenium transferase from Moorella thermoacetica (strain ATCC 39073 / JCM 9320).